The chain runs to 146 residues: 3-hydroxyacyl-[acyl-carrier-protein] dehydratase FabZ (146 aa).

Residue H48 is part of the active site.

The protein belongs to the thioester dehydratase family. FabZ subfamily.

It is found in the cytoplasm. The enzyme catalyses a (3R)-hydroxyacyl-[ACP] = a (2E)-enoyl-[ACP] + H2O. Functionally, involved in unsaturated fatty acids biosynthesis. Catalyzes the dehydration of short chain beta-hydroxyacyl-ACPs and long chain saturated and unsaturated beta-hydroxyacyl-ACPs. The protein is 3-hydroxyacyl-[acyl-carrier-protein] dehydratase FabZ of Teredinibacter turnerae (strain ATCC 39867 / T7901).